The sequence spans 56 residues: Large ribosomal subunit protein eL37 (56 aa).

4 residues coordinate Zn(2+): cysteine 19, cysteine 22, cysteine 34, and cysteine 37. The segment at 19–37 (CRRCGSVSLNIHTKQCTSC) adopts a C4-type zinc-finger fold.

Belongs to the eukaryotic ribosomal protein eL37 family. Requires Zn(2+) as cofactor.

Binds to the 23S rRNA. This chain is Large ribosomal subunit protein eL37, found in Methanococcoides burtonii (strain DSM 6242 / NBRC 107633 / OCM 468 / ACE-M).